A 361-amino-acid chain; its full sequence is tRNA N6-adenosine threonylcarbamoyltransferase (361 aa).

Fe cation is bound by residues His-110 and His-114. Substrate contacts are provided by residues 132-136 (LVSGG), Asp-165, Gly-178, Asp-182, and Asn-284. Asp-312 is a Fe cation binding site.

It belongs to the KAE1 / TsaD family. Fe(2+) is required as a cofactor.

Its subcellular location is the cytoplasm. The enzyme catalyses L-threonylcarbamoyladenylate + adenosine(37) in tRNA = N(6)-L-threonylcarbamoyladenosine(37) in tRNA + AMP + H(+). In terms of biological role, required for the formation of a threonylcarbamoyl group on adenosine at position 37 (t(6)A37) in tRNAs that read codons beginning with adenine. Is involved in the transfer of the threonylcarbamoyl moiety of threonylcarbamoyl-AMP (TC-AMP) to the N6 group of A37, together with TsaE and TsaB. TsaD likely plays a direct catalytic role in this reaction. This Desulfovibrio desulfuricans (strain ATCC 27774 / DSM 6949 / MB) protein is tRNA N6-adenosine threonylcarbamoyltransferase.